The chain runs to 166 residues: Large ribosomal subunit protein uL10 (166 aa).

This sequence belongs to the universal ribosomal protein uL10 family. As to quaternary structure, part of the ribosomal stalk of the 50S ribosomal subunit. The N-terminus interacts with L11 and the large rRNA to form the base of the stalk. The C-terminus forms an elongated spine to which L12 dimers bind in a sequential fashion forming a multimeric L10(L12)X complex.

Its function is as follows. Forms part of the ribosomal stalk, playing a central role in the interaction of the ribosome with GTP-bound translation factors. The chain is Large ribosomal subunit protein uL10 from Listeria monocytogenes serotype 4b (strain CLIP80459).